Reading from the N-terminus, the 479-residue chain is Sulfate adenylyltransferase subunit 1 (479 aa).

Residues 25–239 form the tr-type G domain; it reads KSLLRFLTCG…EVLETVDIQR (215 aa). The G1 stretch occupies residues 34-41; that stretch reads GSVDDGKS. 34-41 serves as a coordination point for GTP; it reads GSVDDGKS. The interval 92 to 96 is G2; it reads GITID. Residues 113–116 are G3; sequence DTPG. GTP-binding positions include 113–117 and 168–171; these read DTPGH and NKMD. Residues 168–171 form a G4 region; it reads NKMD. The tract at residues 206 to 208 is G5; that stretch reads SAL.

It belongs to the TRAFAC class translation factor GTPase superfamily. Classic translation factor GTPase family. CysN/NodQ subfamily. In terms of assembly, heterodimer composed of CysD, the smaller subunit, and CysN.

The enzyme catalyses sulfate + ATP + H(+) = adenosine 5'-phosphosulfate + diphosphate. It participates in sulfur metabolism; hydrogen sulfide biosynthesis; sulfite from sulfate: step 1/3. Functionally, with CysD forms the ATP sulfurylase (ATPS) that catalyzes the adenylation of sulfate producing adenosine 5'-phosphosulfate (APS) and diphosphate, the first enzymatic step in sulfur assimilation pathway. APS synthesis involves the formation of a high-energy phosphoric-sulfuric acid anhydride bond driven by GTP hydrolysis by CysN coupled to ATP hydrolysis by CysD. The polypeptide is Sulfate adenylyltransferase subunit 1 (Salmonella newport (strain SL254)).